The sequence spans 138 residues: ATP synthase epsilon chain (138 aa).

This sequence belongs to the ATPase epsilon chain family. In terms of assembly, F-type ATPases have 2 components, CF(1) - the catalytic core - and CF(0) - the membrane proton channel. CF(1) has five subunits: alpha(3), beta(3), gamma(1), delta(1), epsilon(1). CF(0) has three main subunits: a, b and c.

Its subcellular location is the cell inner membrane. Its function is as follows. Produces ATP from ADP in the presence of a proton gradient across the membrane. This chain is ATP synthase epsilon chain, found in Citrifermentans bemidjiense (strain ATCC BAA-1014 / DSM 16622 / JCM 12645 / Bem) (Geobacter bemidjiensis).